The primary structure comprises 505 residues: Histidine ammonia-lyase (505 aa).

The segment at residues 141-143 (ASG) is a cross-link (5-imidazolinone (Ala-Gly)). Ser-142 is modified (2,3-didehydroalanine (Ser)).

It belongs to the PAL/histidase family. Contains an active site 4-methylidene-imidazol-5-one (MIO), which is formed autocatalytically by cyclization and dehydration of residues Ala-Ser-Gly.

It localises to the cytoplasm. It catalyses the reaction L-histidine = trans-urocanate + NH4(+). The protein operates within amino-acid degradation; L-histidine degradation into L-glutamate; N-formimidoyl-L-glutamate from L-histidine: step 1/3. This is Histidine ammonia-lyase from Bacillus mycoides (strain KBAB4) (Bacillus weihenstephanensis).